The following is a 713-amino-acid chain: Glutamine--fructose-6-phosphate aminotransferase [isomerizing] (713 aa).

The For GATase activity role is filled by cysteine 2. The 315-residue stretch at 2–316 (CGIFGYVNFL…DDDIAHIYDG (315 aa)) folds into the Glutamine amidotransferase type-2 domain. SIS domains follow at residues 389 to 528 (WLST…DSIS) and 561 to 703 (CNSS…VDFP).

As to quaternary structure, homotetramer.

The enzyme catalyses D-fructose 6-phosphate + L-glutamine = D-glucosamine 6-phosphate + L-glutamate. Its pathway is nucleotide-sugar biosynthesis; UDP-N-acetyl-alpha-D-glucosamine biosynthesis; alpha-D-glucosamine 6-phosphate from D-fructose 6-phosphate: step 1/1. In terms of biological role, involved in amino sugar synthesis (formation of chitin, supplies the amino sugars of asparagine-linked oligosaccharides of glycoproteins). This is Glutamine--fructose-6-phosphate aminotransferase [isomerizing] (GFA1) from Candida albicans (strain SC5314 / ATCC MYA-2876) (Yeast).